The following is a 744-amino-acid chain: Polyribonucleotide nucleotidyltransferase (744 aa).

Mg(2+) is bound by residues D515 and D521. One can recognise a KH domain in the interval P581–I640. An S1 motif domain is found at G652 to V724.

It belongs to the polyribonucleotide nucleotidyltransferase family. It depends on Mg(2+) as a cofactor.

The protein localises to the cytoplasm. It catalyses the reaction RNA(n+1) + phosphate = RNA(n) + a ribonucleoside 5'-diphosphate. Functionally, involved in mRNA degradation. Catalyzes the phosphorolysis of single-stranded polyribonucleotides processively in the 3'- to 5'-direction. This chain is Polyribonucleotide nucleotidyltransferase, found in Beutenbergia cavernae (strain ATCC BAA-8 / DSM 12333 / CCUG 43141 / JCM 11478 / NBRC 16432 / NCIMB 13614 / HKI 0122).